The chain runs to 120 residues: Large ribosomal subunit protein uL18 (120 aa).

This sequence belongs to the universal ribosomal protein uL18 family. As to quaternary structure, part of the 50S ribosomal subunit; part of the 5S rRNA/L5/L18/L25 subcomplex. Contacts the 5S and 23S rRNAs.

In terms of biological role, this is one of the proteins that bind and probably mediate the attachment of the 5S RNA into the large ribosomal subunit, where it forms part of the central protuberance. This is Large ribosomal subunit protein uL18 from Acidiphilium cryptum (strain JF-5).